We begin with the raw amino-acid sequence, 445 residues long: Phosphoglucosamine mutase (445 aa).

Residue serine 102 is the Phosphoserine intermediate of the active site. Mg(2+) contacts are provided by serine 102, aspartate 241, aspartate 243, and aspartate 245. The residue at position 102 (serine 102) is a Phosphoserine.

This sequence belongs to the phosphohexose mutase family. Mg(2+) is required as a cofactor. In terms of processing, activated by phosphorylation.

The enzyme catalyses alpha-D-glucosamine 1-phosphate = D-glucosamine 6-phosphate. Functionally, catalyzes the conversion of glucosamine-6-phosphate to glucosamine-1-phosphate. The protein is Phosphoglucosamine mutase of Proteus mirabilis (strain HI4320).